A 325-amino-acid chain; its full sequence is Acetyl-coenzyme A carboxylase carboxyl transferase subunit alpha (325 aa).

One can recognise a CoA carboxyltransferase C-terminal domain in the interval 43–297; the sequence is ELENNSTQLR…KTSLIAHLRQ (255 aa).

It belongs to the AccA family. In terms of assembly, acetyl-CoA carboxylase is a heterohexamer composed of biotin carboxyl carrier protein (AccB), biotin carboxylase (AccC) and two subunits each of ACCase subunit alpha (AccA) and ACCase subunit beta (AccD).

It is found in the cytoplasm. The catalysed reaction is N(6)-carboxybiotinyl-L-lysyl-[protein] + acetyl-CoA = N(6)-biotinyl-L-lysyl-[protein] + malonyl-CoA. Its pathway is lipid metabolism; malonyl-CoA biosynthesis; malonyl-CoA from acetyl-CoA: step 1/1. Its function is as follows. Component of the acetyl coenzyme A carboxylase (ACC) complex. First, biotin carboxylase catalyzes the carboxylation of biotin on its carrier protein (BCCP) and then the CO(2) group is transferred by the carboxyltransferase to acetyl-CoA to form malonyl-CoA. This chain is Acetyl-coenzyme A carboxylase carboxyl transferase subunit alpha, found in Cyanothece sp. (strain PCC 7425 / ATCC 29141).